A 285-amino-acid chain; its full sequence is Protein pxr1 (285 aa).

The span at 1 to 11 shows a compositional bias: basic residues; the sequence is MGLAAPRKKIK. The interval 1 to 23 is disordered; sequence MGLAAPRKKIKISHDPNNTNWSR. One can recognise a G-patch domain in the interval 25-79; that stretch reads TSGFGHKILSSQGWTPGSFLGARNAAHAEMFTAASASHIKVVLKDDTLGLGARPK. The disordered stretch occupies residues 144–263; the sequence is TPIVTEEPQG…MGRHVFRGRH (120 aa). Over residues 152 to 163 the composition is skewed to basic and acidic residues; it reads QGIHKDKQEDKL. Residues 190–208 show a composition bias toward basic residues; it reads KKKKSKSKNHREKKDRKRK. A compositionally biased stretch (basic and acidic residues) spans 224 to 234; that stretch reads RSTEKKSKATR. Basic residues predominate over residues 254-263; sequence MGRHVFRGRH.

Belongs to the PINX1 family.

It localises to the nucleus. It is found in the nucleolus. In terms of biological role, involved in rRNA-processing at A0, A1 and A2 sites and negatively regulates telomerase. In Aspergillus niger (strain ATCC MYA-4892 / CBS 513.88 / FGSC A1513), this protein is Protein pxr1 (pxr1).